The primary structure comprises 90 residues: Acylphosphatase (90 aa).

Residues 3-90 form the Acylphosphatase-like domain; the sequence is QYHMIADGRV…KGYRTFSISY (88 aa). Active-site residues include R18 and N36.

It belongs to the acylphosphatase family.

The enzyme catalyses an acyl phosphate + H2O = a carboxylate + phosphate + H(+). The polypeptide is Acylphosphatase (acyP) (Bacillus velezensis (strain DSM 23117 / BGSC 10A6 / LMG 26770 / FZB42) (Bacillus amyloliquefaciens subsp. plantarum)).